Consider the following 276-residue polypeptide: ESX-2 secretion-associated protein EspG2 (276 aa).

It belongs to the EspG family. In terms of assembly, interacts specifically with ESX-2-dependent PE/PPE proteins.

The protein localises to the cytoplasm. Specific chaperone for cognate PE/PPE proteins. Plays an important role in preventing aggregation of PE/PPE dimers. This is ESX-2 secretion-associated protein EspG2 from Mycobacterium tuberculosis (strain CDC 1551 / Oshkosh).